Consider the following 196-residue polypeptide: Ribonuclease H (196 aa).

Residues 58–196 (LAKEEIIWES…GEIKADYGRK (139 aa)) enclose the RNase H type-1 domain. Mg(2+) contacts are provided by D71, E109, D132, and D192.

It belongs to the RNase H family. Mn(2+) is required as a cofactor. The cofactor is Mg(2+).

The protein resides in the cytoplasm. The catalysed reaction is Endonucleolytic cleavage to 5'-phosphomonoester.. Endonuclease that specifically degrades the RNA of RNA-DNA hybrids. The sequence is that of Ribonuclease H (rnhA) from Halalkalibacterium halodurans (strain ATCC BAA-125 / DSM 18197 / FERM 7344 / JCM 9153 / C-125) (Bacillus halodurans).